We begin with the raw amino-acid sequence, 317 residues long: Beta-ketoacyl-[acyl-carrier-protein] synthase III (317 aa).

Residues C112 and H244 contribute to the active site. Residues 245–249 (QANIR) are ACP-binding. Residue N274 is part of the active site.

The protein belongs to the thiolase-like superfamily. FabH family. In terms of assembly, homodimer.

The protein localises to the cytoplasm. It carries out the reaction malonyl-[ACP] + acetyl-CoA + H(+) = 3-oxobutanoyl-[ACP] + CO2 + CoA. It functions in the pathway lipid metabolism; fatty acid biosynthesis. Catalyzes the condensation reaction of fatty acid synthesis by the addition to an acyl acceptor of two carbons from malonyl-ACP. Catalyzes the first condensation reaction which initiates fatty acid synthesis and may therefore play a role in governing the total rate of fatty acid production. Possesses both acetoacetyl-ACP synthase and acetyl transacylase activities. Its substrate specificity determines the biosynthesis of branched-chain and/or straight-chain of fatty acids. This Rickettsia akari (strain Hartford) protein is Beta-ketoacyl-[acyl-carrier-protein] synthase III.